The primary structure comprises 156 residues: Putative pre-16S rRNA nuclease (156 aa).

The protein belongs to the YqgF nuclease family.

The protein resides in the cytoplasm. In terms of biological role, could be a nuclease involved in processing of the 5'-end of pre-16S rRNA. The protein is Putative pre-16S rRNA nuclease of Ehrlichia canis (strain Jake).